The chain runs to 356 residues: Peptide chain release factor 1 (356 aa).

Q233 bears the N5-methylglutamine mark.

The protein belongs to the prokaryotic/mitochondrial release factor family. Post-translationally, methylated by PrmC. Methylation increases the termination efficiency of RF1.

The protein localises to the cytoplasm. In terms of biological role, peptide chain release factor 1 directs the termination of translation in response to the peptide chain termination codons UAG and UAA. This is Peptide chain release factor 1 from Syntrophotalea carbinolica (strain DSM 2380 / NBRC 103641 / GraBd1) (Pelobacter carbinolicus).